A 477-amino-acid polypeptide reads, in one-letter code: ATP-dependent rRNA helicase RRP3 (477 aa).

The disordered stretch occupies residues 1-22 (MSVKVDGMINKKSKTHSKKLDA). Positions 65 to 93 (KSFNELKLIPELLEAIQQMKFTKPTPIQS) match the Q motif motif. The Helicase ATP-binding domain maps to 96 to 267 (IPHALEGKDI…RASLHNPVRV (172 aa)). Position 109–116 (109–116 (AQTGSGKT)) interacts with ATP. Residues 215–218 (DEAD) carry the DEAD box motif. The Helicase C-terminal domain maps to 294 to 438 (YLIHLLNEFL…KDPSPSKAVL (145 aa)). A disordered region spans residues 452-477 (AIRQTKDFHEKRNPKKNRDDRDREER).

It belongs to the DEAD box helicase family. DDX47/RRP3 subfamily. In terms of assembly, interacts with the SSU processome.

The protein resides in the nucleus. The enzyme catalyses ATP + H2O = ADP + phosphate + H(+). In terms of biological role, ATP-dependent rRNA helicase required for pre-ribosomal RNA processing. Involved in the maturation of the 35S-pre-rRNA and to its cleavage to mature 18S rRNA. The sequence is that of ATP-dependent rRNA helicase RRP3 from Debaryomyces hansenii (strain ATCC 36239 / CBS 767 / BCRC 21394 / JCM 1990 / NBRC 0083 / IGC 2968) (Yeast).